The following is a 221-amino-acid chain: Fanconi anemia core complex-associated protein 24 (221 aa).

As to quaternary structure, belongs to the multisubunit FA complex composed of FANCA, FANCB, FANCC, FANCE, FANCF, FANCG, FANCL/PHF9, FANCM and FAAP24. Interacts with FANCM.

Its subcellular location is the nucleus. Its function is as follows. Plays a role in DNA repair through recruitment of the FA core complex to damaged DNA. Regulates FANCD2 monoubiquitination upon DNA damage. Induces chromosomal instability as well as hypersensitivity to DNA cross-linking agents, when repressed. Targets FANCM/FAAP24 complex to the DNA, preferentially to single strand DNA. This Mus musculus (Mouse) protein is Fanconi anemia core complex-associated protein 24.